The following is a 382-amino-acid chain: Protein phosphatase 1A (382 aa).

Gly2 carries the N-myristoyl glycine lipid modification. The 269-residue stretch at 23-291 (RYGLSSMQGW…DNMSVILICF (269 aa)) folds into the PPM-type phosphatase domain. The Mn(2+) site is built by Asp60, Gly61, Asp239, and Asp282. 2 positions are modified to phosphoserine: Ser375 and Ser377.

The protein belongs to the PP2C family. In terms of assembly, monomer. Interacts with SMAD2; the interaction dephosphorylates SMAD2 in its C-terminal SXS motif resulting in disruption of the SMAD2/SMAD4 complex, SMAD2 nuclear export and termination of the TGF-beta-mediated signaling. Interacts with SMAD2; the interaction dephosphorylates SMAD2 in its C-terminal SXS motif resulting in disruption of the SMAD2/SMAD4 complex, SMAD2 nuclear export and termination of the TGF-beta-mediated signaling. Interacts with the phosphorylated form of IKBKB/IKKB. It depends on Mg(2+) as a cofactor. Mn(2+) serves as cofactor. In terms of processing, N-myristoylation is essential for the recognition of its substrates for dephosphorylation.

It localises to the nucleus. The protein resides in the cytoplasm. Its subcellular location is the cytosol. The protein localises to the membrane. It carries out the reaction O-phospho-L-seryl-[protein] + H2O = L-seryl-[protein] + phosphate. The enzyme catalyses O-phospho-L-threonyl-[protein] + H2O = L-threonyl-[protein] + phosphate. In terms of biological role, enzyme with a broad specificity. Negatively regulates TGF-beta signaling through dephosphorylating SMAD2 and SMAD3, resulting in their dissociation from SMAD4, nuclear export of the SMADs and termination of the TGF-beta-mediated signaling. Dephosphorylates PRKAA1 and PRKAA2. Plays an important role in the termination of TNF-alpha-mediated NF-kappa-B activation through dephosphorylating and inactivating IKBKB/IKKB. The polypeptide is Protein phosphatase 1A (Ppm1a) (Mus musculus (Mouse)).